The sequence spans 431 residues: Beta-lactamase hydrolase-like protein (431 aa).

Positions 212, 214, and 286 each coordinate Zn(2+). Aspartate 309 lines the substrate pocket.

It belongs to the metallo-beta-lactamase superfamily. Zn(2+) is required as a cofactor.

In terms of biological role, could play a role in cell adherence or biofilm development. The protein is Beta-lactamase hydrolase-like protein of Xylella fastidiosa (strain 9a5c).